The primary structure comprises 135 residues: Small ribosomal subunit protein uS8 (135 aa).

It belongs to the universal ribosomal protein uS8 family. In terms of assembly, part of the 30S ribosomal subunit. Contacts proteins S5 and S12.

One of the primary rRNA binding proteins, it binds directly to 16S rRNA central domain where it helps coordinate assembly of the platform of the 30S subunit. In Salinispora arenicola (strain CNS-205), this protein is Small ribosomal subunit protein uS8.